We begin with the raw amino-acid sequence, 34 residues long: Cytochrome c oxidase subunit 6B (34 aa).

This sequence belongs to the cytochrome c oxidase subunit 6B family. In terms of assembly, component of the cytochrome c oxidase (complex IV, CIV), a multisubunit enzyme composed of 14 subunits. The complex is composed of a catalytic core of 3 subunits MT-CO1, MT-CO2 and MT-CO3, encoded in the mitochondrial DNA, and 11 supernumerary subunits COX4I, COX5A, COX5B, COX6A, COX6B, COX6C, COX7A, COX7B, COX7C, COX8 and NDUFA4, which are encoded in the nuclear genome. The complex exists as a monomer or a dimer and forms supercomplexes (SCs) in the inner mitochondrial membrane with NADH-ubiquinone oxidoreductase (complex I, CI) and ubiquinol-cytochrome c oxidoreductase (cytochrome b-c1 complex, complex III, CIII), resulting in different assemblies (supercomplex SCI(1)III(2)IV(1) and megacomplex MCI(2)III(2)IV(2)). Post-translationally, the N-terminus is blocked.

It localises to the mitochondrion inner membrane. It participates in energy metabolism; oxidative phosphorylation. Its function is as follows. Component of the cytochrome c oxidase, the last enzyme in the mitochondrial electron transport chain which drives oxidative phosphorylation. The respiratory chain contains 3 multisubunit complexes succinate dehydrogenase (complex II, CII), ubiquinol-cytochrome c oxidoreductase (cytochrome b-c1 complex, complex III, CIII) and cytochrome c oxidase (complex IV, CIV), that cooperate to transfer electrons derived from NADH and succinate to molecular oxygen, creating an electrochemical gradient over the inner membrane that drives transmembrane transport and the ATP synthase. Cytochrome c oxidase is the component of the respiratory chain that catalyzes the reduction of oxygen to water. Electrons originating from reduced cytochrome c in the intermembrane space (IMS) are transferred via the dinuclear copper A center (CU(A)) of subunit 2 and heme A of subunit 1 to the active site in subunit 1, a binuclear center (BNC) formed by heme A3 and copper B (CU(B)). The BNC reduces molecular oxygen to 2 water molecules using 4 electrons from cytochrome c in the IMS and 4 protons from the mitochondrial matrix. The polypeptide is Cytochrome c oxidase subunit 6B (Thunnus obesus (Bigeye tuna)).